Reading from the N-terminus, the 424-residue chain is MTATEINFDGLIGPMHNYAGLSPGNIASATNAGAISQPRAAALQGLAKMKRLMDRGLVQGFIPPPRRPAVAALRALGFGGDDRSVIARAAAEDPVLFNNACSASAMWAANAATVIAAPDSGDGRVHLVTANLATMLHRSFEAPDTFATLRTIFADQRHFAVHPALPGTQHFSDEGAANHMRITPRHGERGLDIFVHGAARGSRFPERQAKRAGEAVARLAGADAFHTLQSQAAIEAGAFHNDVVAVANEHVLLAHAAAFEDRDGLFAAAGRAVPDFVAVEVDSIGLDDAISSYLFNSQLLTLPEGGMALVLPSETRENPRVWAAVETILAGNNPINEAIVVDVRESMRNGGGPACLRLRVPVGEEALRAIDPRFLLDERRWEALCALVERHWPERIDAAELADPALWAAAGAAHDALDTLLARV.

Substrate contacts are provided by residues 19–28, Asn110, and 137–138; these read AGLSPGNIAS and HR. The active site involves Glu174. Arg207 contributes to the substrate binding site. Residue His240 is part of the active site. Asp242 and Asn349 together coordinate substrate. Cys355 functions as the Nucleophile in the catalytic mechanism.

The protein belongs to the succinylarginine dihydrolase family. In terms of assembly, homodimer.

The catalysed reaction is N(2)-succinyl-L-arginine + 2 H2O + 2 H(+) = N(2)-succinyl-L-ornithine + 2 NH4(+) + CO2. It participates in amino-acid degradation; L-arginine degradation via AST pathway; L-glutamate and succinate from L-arginine: step 2/5. Functionally, catalyzes the hydrolysis of N(2)-succinylarginine into N(2)-succinylornithine, ammonia and CO(2). In Rhizorhabdus wittichii (strain DSM 6014 / CCUG 31198 / JCM 15750 / NBRC 105917 / EY 4224 / RW1) (Sphingomonas wittichii), this protein is N-succinylarginine dihydrolase.